Here is a 406-residue protein sequence, read N- to C-terminus: Cysteine desulfurase (406 aa).

At lysine 226 the chain carries N6-(pyridoxal phosphate)lysine. The Cysteine persulfide intermediate role is filled by cysteine 364.

Belongs to the class-V pyridoxal-phosphate-dependent aminotransferase family. Csd subfamily. As to quaternary structure, homodimer. Interacts with SufE and the SufBCD complex composed of SufB, SufC and SufD. The interaction with SufE is required to mediate the direct transfer of the sulfur atom from the S-sulfanylcysteine. It depends on pyridoxal 5'-phosphate as a cofactor.

Its subcellular location is the cytoplasm. The catalysed reaction is (sulfur carrier)-H + L-cysteine = (sulfur carrier)-SH + L-alanine. It catalyses the reaction L-selenocysteine + AH2 = hydrogenselenide + L-alanine + A + H(+). Its pathway is cofactor biosynthesis; iron-sulfur cluster biosynthesis. Functionally, cysteine desulfurases mobilize the sulfur from L-cysteine to yield L-alanine, an essential step in sulfur metabolism for biosynthesis of a variety of sulfur-containing biomolecules. Component of the suf operon, which is activated and required under specific conditions such as oxidative stress and iron limitation. Acts as a potent selenocysteine lyase in vitro, that mobilizes selenium from L-selenocysteine. Selenocysteine lyase activity is however unsure in vivo. The polypeptide is Cysteine desulfurase (Serratia proteamaculans (strain 568)).